Reading from the N-terminus, the 464-residue chain is Keratin, type I cytoskeletal 28 (464 aa).

The head stretch occupies residues 1–85; the sequence is MSLRFSSGSR…GSEGGLFSGN (85 aa). Residues 86–121 are coil 1A; sequence EKVTMQNLNDRLASYLDNVRALEEANAELERKIKSW. An IF rod domain is found at 86 to 401; the sequence is EKVTMQNLND…RLIDGDRNSC (316 aa). Positions 122-143 are linker 1; it reads YEKHGPGSCHGLDHDYSRYHLT. The tract at residues 144 to 235 is coil 1B; sequence IEDLKNKIIS…KNHEEEVKAL (92 aa). Positions 236–258 are linker 12; that stretch reads QCVAGGNVNVEMNAAPGVDLTLL. A coil 2 region spans residues 259–397; the sequence is LNNMRAEYED…ETYCRLIDGD (139 aa). Positions 398 to 464 are tail; the sequence is RNSCSKSKGF…NGKTKQRVPF (67 aa). The segment covering 402 to 417 has biased composition (low complexity); the sequence is SKSKGFGSGSPGNSSK. 2 disordered regions span residues 402–422 and 440–464; these read SKSK…LSRT and SSRV…RVPF.

It belongs to the intermediate filament family. As to quaternary structure, heterotetramer of two type I and two type II keratins.

The protein localises to the cytoplasm. Essential for the proper assembly of types I and II keratin protein complexes and the formation of keratin intermediate filaments in the inner root sheath (irs). In Bos taurus (Bovine), this protein is Keratin, type I cytoskeletal 28.